Reading from the N-terminus, the 315-residue chain is tRNA dimethylallyltransferase (315 aa).

9 to 16 is an ATP binding site; that stretch reads GPTASGKT. 11–16 is a binding site for substrate; that stretch reads TASGKT. Interaction with substrate tRNA regions lie at residues 34-37 and 158-162; these read DSLL and QRIQR.

Belongs to the IPP transferase family. Monomer. Mg(2+) is required as a cofactor.

The catalysed reaction is adenosine(37) in tRNA + dimethylallyl diphosphate = N(6)-dimethylallyladenosine(37) in tRNA + diphosphate. Catalyzes the transfer of a dimethylallyl group onto the adenine at position 37 in tRNAs that read codons beginning with uridine, leading to the formation of N6-(dimethylallyl)adenosine (i(6)A). The chain is tRNA dimethylallyltransferase from Acidithiobacillus ferrooxidans (strain ATCC 53993 / BNL-5-31) (Leptospirillum ferrooxidans (ATCC 53993)).